We begin with the raw amino-acid sequence, 241 residues long: PHD finger protein ALFIN-LIKE 1 (241 aa).

Ala2 is modified (N-acetylalanine). Residues 142–182 (DGKPSMDLGSKSRNGVKRSIEGQTKSTPKLMEESYEDEDDE) are disordered. Residues 185–237 (DTLCGSCGGNYTNDEFWICCDVCERWYHGKCVKITPAKAESIKQYKCPSCCTK) form a PHD-type zinc finger.

It belongs to the Alfin family. In terms of assembly, interacts with H3K4me3 and to a lesser extent with H3K4me2. As to expression, ubiquitously expressed.

It is found in the nucleus. Functionally, histone-binding component that specifically recognizes H3 tails trimethylated on 'Lys-4' (H3K4me3), which mark transcription start sites of virtually all active genes. The polypeptide is PHD finger protein ALFIN-LIKE 1 (AL1) (Arabidopsis thaliana (Mouse-ear cress)).